A 709-amino-acid polypeptide reads, in one-letter code: Bud site selection protein 14 (709 aa).

Position 2 is an N-acetylserine (S2). Residues D61 to E258 form a disordered region. Composition is skewed to polar residues over residues I62–T74 and V89–S107. Composition is skewed to basic and acidic residues over residues E111–D123 and V131–S150. Y159 is modified (phosphotyrosine). A phosphoserine mark is found at S160 and S162. Phosphothreonine is present on T177. S212 and S222 each carry phosphoserine. The span at S212 to D226 shows a compositional bias: acidic residues. Positions L259 to E320 constitute an SH3 domain. The disordered stretch occupies residues S334–L367. Phosphoserine occurs at positions 376, 378, and 401. The segment covering D396 to G406 has biased composition (acidic residues). 4 disordered regions span residues D396–K421, N464–D510, A525–A571, and A600–K680. Over residues R470 to P504 the composition is skewed to basic and acidic residues. S507 is modified (phosphoserine). A compositionally biased stretch (polar residues) spans S531–N552. Low complexity predominate over residues E553 to S569. Positions A600–A614 are enriched in polar residues. A compositionally biased stretch (basic and acidic residues) spans E615 to Q633. Phosphoserine is present on residues S655, S658, and S670. Low complexity predominate over residues S655 to N671.

In terms of assembly, interacts with GLC7.

Its function is as follows. Important for bud site selection. Seems to be a regulatory subunit of the BUD14-GLC7 type-I phosphatase complex. The BUD14-GLC7 complex is necessary to regulate microtubule dynamics at the cortex and may function as a specific activator of the dynein complex. The sequence is that of Bud site selection protein 14 (BUD14) from Saccharomyces cerevisiae (strain ATCC 204508 / S288c) (Baker's yeast).